The sequence spans 74 residues: Small ribosomal subunit protein bS18 (74 aa).

This sequence belongs to the bacterial ribosomal protein bS18 family. In terms of assembly, part of the 30S ribosomal subunit. Forms a tight heterodimer with protein bS6.

In terms of biological role, binds as a heterodimer with protein bS6 to the central domain of the 16S rRNA, where it helps stabilize the platform of the 30S subunit. This is Small ribosomal subunit protein bS18 from Novosphingobium aromaticivorans (strain ATCC 700278 / DSM 12444 / CCUG 56034 / CIP 105152 / NBRC 16084 / F199).